A 506-amino-acid polypeptide reads, in one-letter code: Histidine--tRNA ligase (506 aa).

This sequence belongs to the class-II aminoacyl-tRNA synthetase family. Homodimer.

It is found in the cytoplasm. It catalyses the reaction tRNA(His) + L-histidine + ATP = L-histidyl-tRNA(His) + AMP + diphosphate + H(+). The polypeptide is Histidine--tRNA ligase (hisS) (Bradyrhizobium diazoefficiens (strain JCM 10833 / BCRC 13528 / IAM 13628 / NBRC 14792 / USDA 110)).